Consider the following 552-residue polypeptide: Non-structural protein NS1 (552 aa).

Belongs to the orbivirus non-structural protein NS1 family.

The sequence is that of Non-structural protein NS1 (Segment-5) from Antilocapra americana (Pronghorn).